Here is a 290-residue protein sequence, read N- to C-terminus: Microtubule-associated protein P320 (290 aa).

Repeats lie at residues 1-38, 39-76, 77-114, 115-152, 153-190, 191-228, 229-266, and 267-290; these read SEYRQKRTVGEEVTTDMRHVDESHFLTTTHEAYKPIDP, SEYRQKRTVGEEVTTNMRHVDESHFLTTTHEAYKPIDP, and SEYRQKRTVGEEVTTDMRHVDESH. The interval 251–290 is disordered; the sequence is SHFLTTTHEAYKPIDPSEYRQKRTVGEEVTTDMRHVDESH. Basic and acidic residues predominate over residues 259-290; that stretch reads EAYKPIDPSEYRQKRTVGEEVTTDMRHVDESH.

The protein resides in the cytoplasm. It localises to the cytoskeleton. In Trypanosoma brucei brucei, this protein is Microtubule-associated protein P320.